The sequence spans 396 residues: MRRLFTSESVTEGHPDKMADQISDAILDAIIEQDPKARVAVETLLTTGVAIVAGEVTTKAYVDVQDIVRKTVLDIGYTRAKYGFDGETCAVLSSIHSQSPDIALGVNEAAEFKQGDKAEDEIEKVGAGDQGMMFGYATNETEELMPLPIMLAHKLAMKLAEVRKNGTVPFLRPDGKTQVTIEYDENEKPVRVDTVLISTQHEPDVTIPEIREALVKYVINPIIPENLRDDNMKILVNPTGRFVLGGPSADTGLTGRKIIVDTYGGAIPHGGGAFSGKDPTKVDRSAHYFARYVAKNVVAAGLADKFMIQVAYAIGVARPVSIMINTFGTAKVDEEKLRKVVEEIFDFRPGAIIKKLDLLRPIYRKTAAYGHFGRNDPDFTWERTDMVRELKAAFNL.

His14 serves as a coordination point for ATP. Asp16 contacts Mg(2+). Residue Glu42 coordinates K(+). The L-methionine site is built by Glu55 and Gln98. A flexible loop region spans residues Gln98–Glu108. ATP is bound by residues Asp174–Lys176, Arg241–Phe242, Asp250, Arg256–Lys257, Ala273, and Lys277. Residue Asp250 coordinates L-methionine. Lys281 provides a ligand contact to L-methionine.

This sequence belongs to the AdoMet synthase family. In terms of assembly, homotetramer; dimer of dimers. Requires Mg(2+) as cofactor. K(+) is required as a cofactor.

The protein resides in the cytoplasm. It carries out the reaction L-methionine + ATP + H2O = S-adenosyl-L-methionine + phosphate + diphosphate. Its pathway is amino-acid biosynthesis; S-adenosyl-L-methionine biosynthesis; S-adenosyl-L-methionine from L-methionine: step 1/1. In terms of biological role, catalyzes the formation of S-adenosylmethionine (AdoMet) from methionine and ATP. The overall synthetic reaction is composed of two sequential steps, AdoMet formation and the subsequent tripolyphosphate hydrolysis which occurs prior to release of AdoMet from the enzyme. In Fervidobacterium nodosum (strain ATCC 35602 / DSM 5306 / Rt17-B1), this protein is S-adenosylmethionine synthase.